The chain runs to 280 residues: MMESGDRQNNKIGIIGGSGLESIELFTVKDKVNCNTPYGKPSSSLINGTLNGIECVLLSRHGDSHDIMPTDVNYRANLYALKEAGCSIILATTACGSLQEELKPTDFVVIDQFIDRTTKRHSTFYDGQNVQMKGVCHIPMRNPFCEKLQNVLLSACNVNNVSCHSKGTMVTIEGPRFSTYAESNLFRKWGGSLINMTTVPEVVLANELGMLYAALAMVTDYDCWKEDHASVNVENVMKTMKVNRGNALKVLVSAVEIISKQNLQPDIQLAEKNAKNSVML.

Residues serine 18, 60–61 (RH), and 93–94 (TA) each bind phosphate. Residue methionine 196 coordinates substrate. Threonine 197 contacts phosphate. 220 to 222 (DYD) provides a ligand contact to substrate.

The protein belongs to the PNP/MTAP phosphorylase family. MTAP subfamily. Homotrimer.

The protein localises to the cytoplasm. The protein resides in the nucleus. The catalysed reaction is S-methyl-5'-thioadenosine + phosphate = 5-(methylsulfanyl)-alpha-D-ribose 1-phosphate + adenine. The protein operates within amino-acid biosynthesis; L-methionine biosynthesis via salvage pathway; S-methyl-5-thio-alpha-D-ribose 1-phosphate from S-methyl-5'-thioadenosine (phosphorylase route): step 1/1. Functionally, catalyzes the reversible phosphorylation of S-methyl-5'-thioadenosine (MTA) to adenine and 5-methylthioribose-1-phosphate. Involved in the breakdown of MTA, a major by-product of polyamine biosynthesis. Responsible for the first step in the methionine salvage pathway after MTA has been generated from S-adenosylmethionine. Has broad substrate specificity with 6-aminopurine nucleosides as preferred substrates. The polypeptide is S-methyl-5'-thioadenosine phosphorylase (Ciona intestinalis (Transparent sea squirt)).